Reading from the N-terminus, the 280-residue chain is Lipase chaperone (280 aa).

Residues 5 to 22 (ALTIITIASGSLGAVYFL) traverse the membrane as a helical segment.

It belongs to the lipase chaperone family.

The protein resides in the cell inner membrane. Functionally, may be involved in the folding of the extracellular lipase during its passage through the periplasm. In Vibrio vulnificus (strain YJ016), this protein is Lipase chaperone (lifO).